The chain runs to 448 residues: Adenylosuccinate synthetase (448 aa).

GTP is bound by residues 22–28 (GDEGKGK) and 50–52 (GHT). Asp-23 functions as the Proton acceptor in the catalytic mechanism. Mg(2+) is bound by residues Asp-23 and Gly-50. Residues 23 to 26 (DEGK), 48 to 51 (NAGH), Thr-139, Arg-153, Gln-234, Thr-249, and Arg-321 each bind IMP. The Proton donor role is filled by His-51. Residue 317 to 323 (SVTGRPR) coordinates substrate. GTP-binding positions include Arg-323, 349–351 (KLD), and 431–433 (STG).

This sequence belongs to the adenylosuccinate synthetase family. As to quaternary structure, homodimer. The cofactor is Mg(2+).

Its subcellular location is the cytoplasm. It catalyses the reaction IMP + L-aspartate + GTP = N(6)-(1,2-dicarboxyethyl)-AMP + GDP + phosphate + 2 H(+). The protein operates within purine metabolism; AMP biosynthesis via de novo pathway; AMP from IMP: step 1/2. Its function is as follows. Plays an important role in the de novo pathway of purine nucleotide biosynthesis. Catalyzes the first committed step in the biosynthesis of AMP from IMP. This is Adenylosuccinate synthetase from Burkholderia mallei (strain NCTC 10247).